The chain runs to 237 residues: Carbonyl reductase family member 4 (237 aa).

NADP(+) contacts are provided by residues 11–14 (SRGI), 34–35 (RN), Asp-57, and 84–86 (AAG). Residue Ser-135 participates in substrate binding. NADP(+) is bound by residues Tyr-148, Lys-152, and 181 to 183 (IHT). Catalysis depends on Tyr-148, which acts as the Proton acceptor.

It belongs to the short-chain dehydrogenases/reductases (SDR) family. As to quaternary structure, homotetramer (in vitro). Heterotetramer with HSD17B8; contains two molecules each of HSD17B8 and CBR4.

Its subcellular location is the mitochondrion matrix. It participates in lipid metabolism; fatty acid biosynthesis. Its function is as follows. The heterotetramer with HSD17B8 has NADH-dependent 3-ketoacyl-acyl carrier protein reductase activity, and thereby plays a role in mitochondrial fatty acid biosynthesis. Within the heterotetramer, HSD17B8 binds NADH; CBR4 binds NADPD. The homotetramer has NADPH-dependent quinone reductase activity. Both homotetramer and the heterotetramer have broad in vitro substrate specificity and can reduce 9,10-phenanthrenequinone, 1,4-benzoquinone and various other o-quinones and p-quinones. This chain is Carbonyl reductase family member 4 (cbr4), found in Danio rerio (Zebrafish).